Here is a 159-residue protein sequence, read N- to C-terminus: Transcriptional repressor NrdR (159 aa).

The segment at 3–34 (CPFCRHDDTQVVDSRVSEDGAAIRRRRRCSAC) is a zinc-finger region. The ATP-cone domain occupies 49–139 (PAVVKKDGSR…VYRRFEDVSE (91 aa)).

Belongs to the NrdR family. Zn(2+) serves as cofactor.

Functionally, negatively regulates transcription of bacterial ribonucleotide reductase nrd genes and operons by binding to NrdR-boxes. The polypeptide is Transcriptional repressor NrdR (Burkholderia cenocepacia (strain HI2424)).